A 242-amino-acid chain; its full sequence is Cysteine-rich venom protein helothermine (242 aa).

An N-terminal signal peptide occupies residues Met1–Gly19. An SCP domain is found at Asp41–Tyr169. Disulfide bonds link Cys77/Cys155, Cys94/Cys170, Cys150/Cys167, Cys189/Cys196, Cys192/Cys201, Cys205/Cys237, Cys214/Cys231, and Cys223/Cys235. In terms of domain architecture, ShKT spans Cys205–Cys237.

It belongs to the CRISP family. As to expression, expressed by the venom gland.

It localises to the secreted. Alters a variety of ion channel activities, including voltage-gated potassium channels (Kv), voltage-gated calcium channels (L-, N-, and P-type) (Cav) and ryanodine receptors (RyR). Is toxic to mice (causes lethargy, partial paralysis of rear limbs and lowering of body temperature). The polypeptide is Cysteine-rich venom protein helothermine (Heloderma horridum horridum (Mexican beaded lizard)).